The primary structure comprises 347 residues: GMP reductase (347 aa).

108 to 131 is an NADP(+) binding site; that stretch reads ADFEKTKQILDLNPALNFVCIDVA. Residues Gly181 and Gly183 each contribute to the K(+) site. Cys186 acts as the Thioimidate intermediate in catalysis. 216 to 239 contributes to the NADP(+) binding site; it reads IVSDGGCTTPGDVAKAFGGGADFV.

It belongs to the IMPDH/GMPR family. GuaC type 1 subfamily. Homotetramer.

It catalyses the reaction IMP + NH4(+) + NADP(+) = GMP + NADPH + 2 H(+). In terms of biological role, catalyzes the irreversible NADPH-dependent deamination of GMP to IMP. It functions in the conversion of nucleobase, nucleoside and nucleotide derivatives of G to A nucleotides, and in maintaining the intracellular balance of A and G nucleotides. The sequence is that of GMP reductase from Shigella boydii serotype 4 (strain Sb227).